The chain runs to 481 residues: uncharacterized protein (481 aa).

This is an uncharacterized protein from Cryphonectria parasitica (Chestnut blight fungus).